The chain runs to 874 residues: Alanine--tRNA ligase (874 aa).

4 residues coordinate Zn(2+): histidine 563, histidine 567, cysteine 665, and histidine 669.

This sequence belongs to the class-II aminoacyl-tRNA synthetase family. The cofactor is Zn(2+).

Its subcellular location is the cytoplasm. It carries out the reaction tRNA(Ala) + L-alanine + ATP = L-alanyl-tRNA(Ala) + AMP + diphosphate. Its function is as follows. Catalyzes the attachment of alanine to tRNA(Ala) in a two-step reaction: alanine is first activated by ATP to form Ala-AMP and then transferred to the acceptor end of tRNA(Ala). Also edits incorrectly charged Ser-tRNA(Ala) and Gly-tRNA(Ala) via its editing domain. The polypeptide is Alanine--tRNA ligase (Haemophilus influenzae (strain 86-028NP)).